We begin with the raw amino-acid sequence, 208 residues long: N-(5'-phosphoribosyl)anthranilate isomerase (208 aa).

The protein belongs to the TrpF family.

It catalyses the reaction N-(5-phospho-beta-D-ribosyl)anthranilate = 1-(2-carboxyphenylamino)-1-deoxy-D-ribulose 5-phosphate. It participates in amino-acid biosynthesis; L-tryptophan biosynthesis; L-tryptophan from chorismate: step 3/5. This chain is N-(5'-phosphoribosyl)anthranilate isomerase, found in Neisseria gonorrhoeae (strain NCCP11945).